The primary structure comprises 56 residues: Large ribosomal subunit protein bL33 (56 aa).

The segment covering 1–12 has biased composition (basic and acidic residues); it reads MATKGGREKIKL. The tract at residues 1–28 is disordered; that stretch reads MATKGGREKIKLESTAGTGHFYTTSKNK. Residues 15–25 are compositionally biased toward polar residues; that stretch reads TAGTGHFYTTS.

It belongs to the bacterial ribosomal protein bL33 family.

The polypeptide is Large ribosomal subunit protein bL33 (Albidiferax ferrireducens (strain ATCC BAA-621 / DSM 15236 / T118) (Rhodoferax ferrireducens)).